Consider the following 507-residue polypeptide: Aldehyde dehydrogenase 1, mitochondrial (507 aa).

The N-terminal 21 residues, 1 to 21 (MLATRNLVPIIRASIKWRIKL), are a transit peptide targeting the mitochondrion. Residue 266-271 (GSTLVG) participates in NAD(+) binding. Active-site residues include Glu289 and Cys323.

This sequence belongs to the aldehyde dehydrogenase family. As to quaternary structure, homotetramer.

It localises to the mitochondrion matrix. The catalysed reaction is an aldehyde + NAD(+) + H2O = a carboxylate + NADH + 2 H(+). Its pathway is alcohol metabolism; ethanol degradation; acetate from ethanol: step 2/2. This chain is Aldehyde dehydrogenase 1, mitochondrial (ALD1), found in Saccharomyces cerevisiae (Baker's yeast).